The sequence spans 130 residues: U-scoloptoxin(17)-Er1a (130 aa).

An N-terminal signal peptide occupies residues 1–18 (MKLLVFALFLQVVQLSLA).

The protein belongs to the scoloptoxin-17 family. Contains 4 disulfide bonds. As to expression, expressed by the venom gland.

It is found in the secreted. This is U-scoloptoxin(17)-Er1a from Ethmostigmus rubripes (Giant centipede).